Here is a 469-residue protein sequence, read N- to C-terminus: MDSAVTAVLAGKYPAKQHARRVAEALKASGHDGSGVIYLEGTKTRMAEDSDEAVPFRQRRNFYYLSGCELADSYVTYNIDQDELVLYIPAADPDEVMWTGLPLSPEEALKKYDVDKVLASSEINAHLAHYCTNKETAPKRVYAIPDRVCAETTFLPFDDTNWDALSNALNQCRKVKDDYEIALLKRSNEISALAHLAVMKAAKLAKNERELEAVFRSTCLSHGSRGQSYGPIVAAGVNGATLHYQTNDMDLEDLVTGERPSLLVDAGGEYRLYCSDITRAYPLSGKFSVEARQIYDIVLDMQTQCMDMIKPGVAWDDIHARAHKVAISGLLRLGILRGSEEELFEKRISVAFFPHGLGHYMGMDTHDVGGNPNHADPNPMFRYLRLRGTLSPSEVVTVEPGVYFCRFIIEPYLSSPELGKYIDSAVLDKYWKVGGVRIEDNLVITQDGYLNLTTVPKDPEEVERIVQQG.

Positions 265, 276, 399, and 439 each coordinate Mn(2+).

It belongs to the peptidase M24B family. Mn(2+) serves as cofactor.

It carries out the reaction Release of any N-terminal amino acid, including proline, that is linked to proline, even from a dipeptide or tripeptide.. In terms of biological role, catalyzes the removal of a penultimate prolyl residue from the N-termini of peptides. In Coccidioides posadasii (strain RMSCC 757 / Silveira) (Valley fever fungus), this protein is Probable Xaa-Pro aminopeptidase PEPP (PEPP).